A 272-amino-acid chain; its full sequence is Dermonecrotic toxin LvSicTox-alphaIC1bii (272 aa).

Residue His5 is part of the active site. Residues Glu25 and Asp27 each coordinate Mg(2+). His41 (nucleophile) is an active-site residue. 2 disulfides stabilise this stretch: Cys45–Cys51 and Cys47–Cys189. A Mg(2+)-binding site is contributed by Asp84.

This sequence belongs to the arthropod phospholipase D family. Class II subfamily. Requires Mg(2+) as cofactor. In terms of tissue distribution, expressed by the venom gland.

Its subcellular location is the secreted. It carries out the reaction an N-(acyl)-sphingosylphosphocholine = an N-(acyl)-sphingosyl-1,3-cyclic phosphate + choline. The catalysed reaction is an N-(acyl)-sphingosylphosphoethanolamine = an N-(acyl)-sphingosyl-1,3-cyclic phosphate + ethanolamine. The enzyme catalyses a 1-acyl-sn-glycero-3-phosphocholine = a 1-acyl-sn-glycero-2,3-cyclic phosphate + choline. It catalyses the reaction a 1-acyl-sn-glycero-3-phosphoethanolamine = a 1-acyl-sn-glycero-2,3-cyclic phosphate + ethanolamine. In terms of biological role, dermonecrotic toxins cleave the phosphodiester linkage between the phosphate and headgroup of certain phospholipids (sphingolipid and lysolipid substrates), forming an alcohol (often choline) and a cyclic phosphate. This toxin acts on sphingomyelin (SM). It may also act on ceramide phosphoethanolamine (CPE), lysophosphatidylcholine (LPC) and lysophosphatidylethanolamine (LPE), but not on lysophosphatidylserine (LPS), and lysophosphatidylglycerol (LPG). It acts by transphosphatidylation, releasing exclusively cyclic phosphate products as second products. Induces dermonecrosis, hemolysis, increased vascular permeability, edema, inflammatory response, and platelet aggregation. This is Dermonecrotic toxin LvSicTox-alphaIC1bii from Loxosceles variegata (Recluse spider).